Reading from the N-terminus, the 217-residue chain is Glycine betaine/carnitine/choline transport system permease protein OpuCB (217 aa).

The ABC transmembrane type-1 domain occupies 19 to 198; it reads TGEHLYISLI…ILAIIIDYVL (180 aa). A run of 6 helical transmembrane segments spans residues 23-43, 52-74, 84-101, 128-148, 150-170, and 180-200; these read LYIS…LGVA, GAVI…AFFI, AIVA…RNTY, LVEI…STIY, IGWA…YIFI, and IIGG…VLAV.

The protein belongs to the binding-protein-dependent transport system permease family. CysTW subfamily. In terms of assembly, the complex is composed of two ATP-binding proteins (OpuCA), two transmembrane proteins (OpuCB and OpuCD) and a solute-binding protein (OpuCC).

Its subcellular location is the cell membrane. Functionally, involved in a high affinity multicomponent binding-protein-dependent transport system for glycine betaine, carnitine and choline; probably responsible for the translocation of the substrate across the membrane. In Bacillus subtilis (strain 168), this protein is Glycine betaine/carnitine/choline transport system permease protein OpuCB (opuCB).